A 237-amino-acid chain; its full sequence is MSVHINAPEGAIAESVLLPGDPLRAKFIAENFLEDVVCYNEVRGMYGFTGTYKGKKISVQGTGMGIPSISIYANELIQSYGVKNLIRVGTCGGYSEKVKVRDLIIAMSASTDSNLNLVRFQGRTFAPTASFELLKPAYDIAVEKGFDPKVGSIYSSDVFYGDDDEDWKKWAKFGCLGVEMEAAALYTIAAKFGVNALALLTVSDHFVTGEVTSAEERQLTFTNMMEVALDTIAKIEN.

H4 provides a ligand contact to a purine D-ribonucleoside. Residues G20, R24, R43, and 87–90 contribute to the phosphate site; that span reads RVGT. Residues 179-181 and 203-204 contribute to the a purine D-ribonucleoside site; these read EME and SD. Catalysis depends on D204, which acts as the Proton donor.

The protein belongs to the PNP/UDP phosphorylase family. As to quaternary structure, homohexamer; trimer of homodimers.

It carries out the reaction a purine D-ribonucleoside + phosphate = a purine nucleobase + alpha-D-ribose 1-phosphate. It catalyses the reaction a purine 2'-deoxy-D-ribonucleoside + phosphate = a purine nucleobase + 2-deoxy-alpha-D-ribose 1-phosphate. In terms of biological role, catalyzes the reversible phosphorolytic breakdown of the N-glycosidic bond in the beta-(deoxy)ribonucleoside molecules, with the formation of the corresponding free purine bases and pentose-1-phosphate. The sequence is that of Purine nucleoside phosphorylase DeoD-type from Clostridium beijerinckii (strain ATCC 51743 / NCIMB 8052) (Clostridium acetobutylicum).